The sequence spans 290 residues: MEWSLTQNKLLAYHRLMRTDKPIGALLLLWPTLWALWVASPGVPPLWILAVFVAGVWLMRAAGCVVNDYADRKFDGHVKRTAHRPLPSGDVTEKEARNLFVILVLLSFLLVLTLNVKTILLSVAALALAWMYPFMKRYTHLPQVVLGAAFGWSIPMAFCAVSESLPLSCWLMFFANICWAVAYDTEYAMVDRDDDVKIGVKSTAILFGRHDKLIIGLLQIAVLALLGTVGWLNGLGAFYYAGLAGAGALFIWQQKIIAGRDRDACFRAFLNNNYVGLLVFIGLALSYLKF.

Helical transmembrane passes span 33 to 53 (LWAL…AVFV), 99 to 119 (LFVI…VKTI), 141 to 161 (LPQV…FCAV), 213 to 233 (LIIG…GWLN), 234 to 254 (GLGA…IWQQ), and 268 to 288 (AFLN…LSYL).

This sequence belongs to the UbiA prenyltransferase family. It depends on Mg(2+) as a cofactor.

Its subcellular location is the cell inner membrane. It catalyses the reaction all-trans-octaprenyl diphosphate + 4-hydroxybenzoate = 4-hydroxy-3-(all-trans-octaprenyl)benzoate + diphosphate. It participates in cofactor biosynthesis; ubiquinone biosynthesis. Its function is as follows. Catalyzes the prenylation of para-hydroxybenzoate (PHB) with an all-trans polyprenyl group. Mediates the second step in the final reaction sequence of ubiquinone-8 (UQ-8) biosynthesis, which is the condensation of the polyisoprenoid side chain with PHB, generating the first membrane-bound Q intermediate 3-octaprenyl-4-hydroxybenzoate. This chain is 4-hydroxybenzoate octaprenyltransferase, found in Cronobacter sakazakii (strain ATCC BAA-894) (Enterobacter sakazakii).